The following is a 161-amino-acid chain: uncharacterized protein (161 aa).

A helical membrane pass occupies residues 30-50 (GVILFRLLGVILFRLLGVILF).

It is found in the membrane. This is an uncharacterized protein from Homo sapiens (Human).